A 361-amino-acid polypeptide reads, in one-letter code: G2/mitotic-specific cyclin-B1 (361 aa).

A compositionally biased stretch (polar residues) spans 1 to 13 (MLRATNNRRTSNN). The tract at residues 1 to 33 (MLRATNNRRTSNNVEKDSLQMAKHGNGPLKPVN) is disordered.

The protein belongs to the cyclin family. Cyclin AB subfamily. As to quaternary structure, interacts with the CDK1 protein kinase to form a serine/threonine kinase holoenzyme complex also known as maturation promoting factor (MPF). The cyclin subunit imparts substrate specificity to the complex. Interacts with E3 ubiquitin-protein ligase etc-1. Post-translationally, ubiquitinated by etc-1 likely during meiosis, resulting in its degradation.

The protein resides in the cytoplasm. Functionally, essential for the control of the cell cycle at the G2/M (mitosis) transition. In Caenorhabditis elegans, this protein is G2/mitotic-specific cyclin-B1 (cyb-1).